Consider the following 402-residue polypeptide: Endoplasmic reticulum junction formation protein lunapark-B (402 aa).

Over 1–45 (MGAIISRWKTKPSTVELLESLDKDIKDLEEFRAKNQRLLKLWVGR) the chain is Cytoplasmic. The chain crosses the membrane as a helical span at residues 46-66 (LLFYSSALYLLTCLCVYYLYF). The Lumenal portion of the chain corresponds to 67–77 (PQQWGARLITA). The helical transmembrane segment at 78–98 (LPLLAFPALVLLLRKMLIFLF) threads the bilayer. The Cytoplasmic portion of the chain corresponds to 99–402 (SKRTERNNDK…EEQKKEDESN (304 aa)). Residues 100–128 (KRTERNNDKLEDLKTQKRKILEEVMETET) are a coiled coil. The tract at residues 142 to 240 (ESKKKAEAEA…PGPGSGMRPP (99 aa)) is disordered. Positions 205-222 (SASTPAGASQAETPQQMM) are enriched in polar residues. The segment at 276–301 (CQQCFSHNGMALKEEFEFVAFRCAYC) adopts a C4-type; plays a role in ER morphology zinc-finger fold. The tract at residues 311 to 402 (RPQAPRLPEF…EEQKKEDESN (92 aa)) is disordered. Residues 321–330 (SFERRLRSES) show a composition bias toward basic and acidic residues. Residues 341 to 352 (TPEDSDAPEDDM) are compositionally biased toward acidic residues. The segment covering 385 to 402 (PHAEAEALEEQKKEDESN) has biased composition (basic and acidic residues).

This sequence belongs to the lunapark family. In terms of assembly, homodimer; homodimerization requires the C4-type zinc finger motif and decreases during mitosis in a phosphorylation-dependent manner. In terms of processing, phosphorylated. Phosphorylation occurs during interphase. Phosphorylation also occurs during mitosis; these phosphorylations reduce both its homodimerization and the ER three-way tubular junction formation.

The protein resides in the endoplasmic reticulum membrane. In terms of biological role, endoplasmic reticulum (ER)-shaping membrane protein that plays a role in determining ER morphology. Involved in the stabilization of nascent three-way ER tubular junctions within the ER network. May also play a role as a curvature-stabilizing protein within three-way ER tubular junction network. The polypeptide is Endoplasmic reticulum junction formation protein lunapark-B (lnpkb) (Danio rerio (Zebrafish)).